We begin with the raw amino-acid sequence, 94 residues long: MRLKPLGDRVVVKVIQAEEVTKGGVILPGTAKEKPQQGEVVAVGTGEYIDGKKVELEVKVGDRVIFSKYAGTEVKLDGEEYLLLRESDILAIIE.

In terms of assembly, heptamer of 7 subunits arranged in a ring. Interacts with the chaperonin GroEL.

The protein resides in the cytoplasm. Together with the chaperonin GroEL, plays an essential role in assisting protein folding. The GroEL-GroES system forms a nano-cage that allows encapsulation of the non-native substrate proteins and provides a physical environment optimized to promote and accelerate protein folding. GroES binds to the apical surface of the GroEL ring, thereby capping the opening of the GroEL channel. In Thermoanaerobacter brockii (Thermoanaerobium brockii), this protein is Co-chaperonin GroES.